Here is a 704-residue protein sequence, read N- to C-terminus: MADSAKTPRGKKRRPFTGLALWIIVALLLGMAMFSLFGRDGYQQIDTQQGLELLAGDTVEQAKIIDGNQQRVDLVLTEDFKDGDEDKGTQVRFSYVDARGDAVVQAVEDAAPAKGYTDEIASSSWWSTLLLSFLPLLIFIGLFWFLIMNAQGGGKAMQFGKSKAKLFNKEAPKVTFADVAGADEAVEELDEIKQFLVDPGRYQAVGAKIPKGVLLYGPPGTGKTLLAKAVAGEANVPFYSISGSDFVEMFVGVGASRVRDLFNTAKENAPAIIFIDEIDAVGRHRGAGMGGGHDEREQTLNQMLVEMDGFEENQNVILIAATNRVDILDPALLRPGRFDRQIGVEAPDLKGRLHILGVHAKGKPLAHDVDLEAVAKRAIGMSGADLANVLNEAALLTARSGNQIIDNRALDEAIDRVSMGPQRYSKVMTERERQMTAYHEGGHALVAAAMNNSAPVTKVTILPRGRAGGYTMVVPTQDRNYQSRNELLDRLAYAMGGYAVEESIFHDVTTGPSSDLQNATKIARTMVMQLGMSGTVGQVALSGEQDEVFVGMQQGQAPRFSAETASLVDQEVRTLLDNALDEAWSVIVENRHVLDRLVEELLEKETLNERELAQIFRDVKKQPPREVWISSTERPSLAAPSVGGTTTATGTESHDAGEPLQPNPPELPHPGGEGPQIPGAPHGGEPGGGGYGYDGSAGTDGTGR.

Over 1 to 17 (MADSAKTPRGKKRRPFT) the chain is Cytoplasmic. The helical transmembrane segment at 18-38 (GLALWIIVALLLGMAMFSLFG) threads the bilayer. Over 39–127 (RDGYQQIDTQ…DEIASSSWWS (89 aa)) the chain is Extracellular. Residues 128–148 (TLLLSFLPLLIFIGLFWFLIM) traverse the membrane as a helical segment. Residues 149 to 704 (NAQGGGKAMQ…GSAGTDGTGR (556 aa)) lie on the Cytoplasmic side of the membrane. Residue 217 to 224 (GPPGTGKT) coordinates ATP. His-439 contributes to the Zn(2+) binding site. Glu-440 is an active-site residue. Residues His-443 and Asp-515 each contribute to the Zn(2+) site. A disordered region spans residues 624-704 (PREVWISSTE…GSAGTDGTGR (81 aa)). A compositionally biased stretch (gly residues) spans 681-704 (PHGGEPGGGGYGYDGSAGTDGTGR).

In the central section; belongs to the AAA ATPase family. This sequence in the C-terminal section; belongs to the peptidase M41 family. Homohexamer. Requires Zn(2+) as cofactor.

The protein resides in the cell membrane. In terms of biological role, acts as a processive, ATP-dependent zinc metallopeptidase for both cytoplasmic and membrane proteins. Plays a role in the quality control of integral membrane proteins. This Brachybacterium faecium (strain ATCC 43885 / DSM 4810 / JCM 11609 / LMG 19847 / NBRC 14762 / NCIMB 9860 / 6-10) protein is ATP-dependent zinc metalloprotease FtsH.